We begin with the raw amino-acid sequence, 301 residues long: MAKQIALPRSQTSPLFQWRAYYEMTKPKVVALMLLTVLVGMCLAVPGTVPLVPLIAGMAGIGMMAGSAAAFNHLIDRRIDGLMARTYNRPLPKGRISIIKAISFASILGTLGFIILYALVNPLTAWLTFASLIGYAVVYTAYLKRATPQNIVVGGLAGAMPPLLGWTAVTGEFHGNALLLVIIIFAWTPPHFWALAIHRKAEYAKVDIPMLPVTHGVEFTKTCIFLYTVLLAIACLLPVLVGMCGPVYLVSSTLLSAGFIYKAWQLKFHETPGLAMNVFKFSIYHLMLLFIALLVDHYLWV.

9 helical membrane-spanning segments follow: residues 29-49 (VVAL…PGTV), 51-71 (LVPL…AAAF), 96-116 (ISII…FIIL), 123-143 (LTAW…TAYL), 151-171 (IVVG…AVTG), 177-197 (ALLL…ALAI), 223-243 (CIFL…LVGM), 244-264 (CGPV…YKAW), and 281-301 (FSIY…YLWV).

The protein belongs to the UbiA prenyltransferase family. Protoheme IX farnesyltransferase subfamily.

The protein resides in the cell inner membrane. The enzyme catalyses heme b + (2E,6E)-farnesyl diphosphate + H2O = Fe(II)-heme o + diphosphate. It participates in porphyrin-containing compound metabolism; heme O biosynthesis; heme O from protoheme: step 1/1. Converts heme B (protoheme IX) to heme O by substitution of the vinyl group on carbon 2 of heme B porphyrin ring with a hydroxyethyl farnesyl side group. This is Protoheme IX farnesyltransferase from Shewanella pealeana (strain ATCC 700345 / ANG-SQ1).